The chain runs to 361 residues: Chorismate synthase (361 aa).

Arg48 and Arg54 together coordinate NADP(+). FMN contacts are provided by residues 125–127 (RSS), 238–239 (NA), Gly278, 293–297 (KPTSS), and Arg319.

Belongs to the chorismate synthase family. Homotetramer. Requires FMNH2 as cofactor.

The enzyme catalyses 5-O-(1-carboxyvinyl)-3-phosphoshikimate = chorismate + phosphate. It functions in the pathway metabolic intermediate biosynthesis; chorismate biosynthesis; chorismate from D-erythrose 4-phosphate and phosphoenolpyruvate: step 7/7. Its function is as follows. Catalyzes the anti-1,4-elimination of the C-3 phosphate and the C-6 proR hydrogen from 5-enolpyruvylshikimate-3-phosphate (EPSP) to yield chorismate, which is the branch point compound that serves as the starting substrate for the three terminal pathways of aromatic amino acid biosynthesis. This reaction introduces a second double bond into the aromatic ring system. The chain is Chorismate synthase from Escherichia coli O157:H7.